The primary structure comprises 188 residues: Adenine phosphoribosyltransferase (188 aa).

It belongs to the purine/pyrimidine phosphoribosyltransferase family. As to quaternary structure, homodimer.

It is found in the cytoplasm. It catalyses the reaction AMP + diphosphate = 5-phospho-alpha-D-ribose 1-diphosphate + adenine. Its pathway is purine metabolism; AMP biosynthesis via salvage pathway; AMP from adenine: step 1/1. In terms of biological role, catalyzes a salvage reaction resulting in the formation of AMP, that is energically less costly than de novo synthesis. In Paraburkholderia xenovorans (strain LB400), this protein is Adenine phosphoribosyltransferase.